We begin with the raw amino-acid sequence, 272 residues long: MIYIGLPQWSHPKWVRLGITSLEEYARHFNCVEGNTTLYALPKPEVVLRWREQTTDDFRFCFKFPATISHQAALRHCDDLVTEFLTRMSPLAPRIGQYWLQLPATFGPRELPALWHFLDSLPGEFNYGVEVRHPQFFAKGEEEQTLNRGLHQRGVNRVILDSRPVHAARPHSEAIRDAQRKKPKVPVHAVLTATNPLIRFIGSDDMTQNRELFQVWLQKLAQWHQTTTPYLFLHTPDIAQAPELVHTLWEDLRKTLPEIGAVPAIPQQSSLF.

The protein belongs to the UPF0759 family.

This chain is UPF0759 protein YecE (yecE), found in Escherichia coli (strain K12).